Here is a 454-residue protein sequence, read N- to C-terminus: Mitochondrial dynamics protein MID49 (454 aa).

Residues 1–22 (MAEFSQKQRKQSGSEGLGSVVD) lie on the Mitochondrial intermembrane side of the membrane. A helical membrane pass occupies residues 23–43 (FLLANARLVLGVGGAAVLGIA). Residues 44–454 (TLAVKRLIDR…SGLQVPESLF (411 aa)) lie on the Cytoplasmic side of the membrane. Residues 76-113 (ATSPQKPQPPPAAFSQPLATGSPSPSVPVEPTPIHSPT) form a disordered region.

Belongs to the MID49/MID51 family. As to quaternary structure, interacts with DNM1L.

The protein localises to the mitochondrion outer membrane. Functionally, mitochondrial outer membrane protein which regulates mitochondrial organization. It is required for mitochondrial fission and promotes the recruitment and association of the fission mediator dynamin-related protein 1 (DNM1L) to the mitochondrial surface independently of the mitochondrial fission FIS1 and MFF proteins. Regulates DNM1L GTPase activity. In Mus musculus (Mouse), this protein is Mitochondrial dynamics protein MID49 (Mief2).